The chain runs to 699 residues: D-(-)-3-hydroxybutyrate oligomer hydrolase (699 aa).

The signal sequence occupies residues 1–19 (MNPSLCIAVAFACPLSALA). Ser303 acts as the Charge relay system in catalysis.

The protein belongs to the D-(-)-3-hydroxybutyrate oligomer hydrolase family.

Its subcellular location is the secreted. The enzyme catalyses (3R)-hydroxybutanoate dimer + H2O = 2 (R)-3-hydroxybutanoate + H(+). It participates in lipid metabolism; butanoate metabolism. Functionally, participates in the degradation of poly-3-hydroxybutyrate (PHB). It works downstream of poly(3-hydroxybutyrate) depolymerase, hydrolyzing D(-)-3-hydroxybutyrate oligomers of various length (3HB-oligomers) into 3HB-monomers. The sequence is that of D-(-)-3-hydroxybutyrate oligomer hydrolase from Azoarcus sp. (strain BH72).